Reading from the N-terminus, the 919-residue chain is Isoleucine--tRNA ligase (919 aa).

The short motif at 57–67 (PYANGHTHIGH) is the 'HIGH' region element. L-isoleucyl-5'-AMP is bound at residue glutamate 569. The 'KMSKS' region motif lies at 610 to 614 (KMSKS). Lysine 613 serves as a coordination point for ATP. Zn(2+)-binding residues include cysteine 895, cysteine 898, cysteine 910, and cysteine 913.

Belongs to the class-I aminoacyl-tRNA synthetase family. IleS type 1 subfamily. As to quaternary structure, monomer. Requires Zn(2+) as cofactor.

The protein localises to the cytoplasm. It catalyses the reaction tRNA(Ile) + L-isoleucine + ATP = L-isoleucyl-tRNA(Ile) + AMP + diphosphate. Its function is as follows. Catalyzes the attachment of isoleucine to tRNA(Ile). As IleRS can inadvertently accommodate and process structurally similar amino acids such as valine, to avoid such errors it has two additional distinct tRNA(Ile)-dependent editing activities. One activity is designated as 'pretransfer' editing and involves the hydrolysis of activated Val-AMP. The other activity is designated 'posttransfer' editing and involves deacylation of mischarged Val-tRNA(Ile). This is Isoleucine--tRNA ligase from Sulfurimonas denitrificans (strain ATCC 33889 / DSM 1251) (Thiomicrospira denitrificans (strain ATCC 33889 / DSM 1251)).